A 301-amino-acid polypeptide reads, in one-letter code: Rhodopsin (301 aa).

The Extracellular segment spans residues 1–18 (LHMIHLHWYQYPPMNPMM). A helical membrane pass occupies residues 19–43 (YPLLLIFMLFTGILCLAGNFVTIWV). The Cytoplasmic segment spans residues 44–55 (FMNTKSLRTPAN). Residues 56–78 (LLVVNLAMSDFLMMFTMFPPMMV) traverse the membrane as a helical segment. Residues 79-92 (TCYYHTWTLGPTFC) are Extracellular-facing. Cys92 and Cys169 are oxidised to a cystine. Residues 93–115 (QVYGFLGNLCGCASIWTMVFITF) traverse the membrane as a helical segment. A 'Ionic lock' involved in activated form stabilization motif is present at residues 116–118 (DRY). The Cytoplasmic segment spans residues 116–134 (DRYNVIVKGVAGEPLSTKK). Residues 135-155 (ASLWILIVWVLSLAWCMAPFF) traverse the membrane as a helical segment. At 156-182 (GWNRYVPEGNLTGCGTDYLSEDILSRS) the chain is on the extracellular side. Residue Asn165 is glycosylated (N-linked (GlcNAc...) asparagine). A helical transmembrane segment spans residues 183-204 (YLYIYSTWVYFLPLTITIYCYV). Residues 205 to 245 (FIIKAVAAHEKGMRDQAKKMGIKSLRNEEAQKTSAECRLAK) lie on the Cytoplasmic side of the membrane. The helical transmembrane segment at 246–267 (IAMTTVALWFIAWTPYLLINWV) threads the bilayer. The Extracellular segment spans residues 268 to 278 (GMFARSYLSPV). The helical transmembrane segment at 279 to 300 (YTIWGYVFAKANAVYNPIVYAI) threads the bilayer. Lys288 is modified (N6-(retinylidene)lysine).

The protein belongs to the G-protein coupled receptor 1 family. Opsin subfamily. As to quaternary structure, homodimer. Interacts with GNAQ. In terms of processing, contains one covalently linked retinal chromophore.

It localises to the cell projection. Its subcellular location is the rhabdomere membrane. Its function is as follows. Photoreceptor required for image-forming vision at low light intensity. Can use both retinal and 3-dehydroretinal as visual pigment. Light-induced isomerization of 11-cis to all-trans retinal triggers a conformational change that activates signaling via G-proteins. Signaling via GNAQ probably mediates the activation of phospholipase C. This chain is Rhodopsin (RHO), found in Procambarus milleri (Miami cave crayfish).